Reading from the N-terminus, the 309-residue chain is Carboxylesterase Culp6 homolog (309 aa).

A helical transmembrane segment spans residues 5–25 (ITVIAVLIVLALIGVGIVQYV). Cysteine 55 and cysteine 146 are disulfide-bonded. Residues serine 157, aspartate 253, and histidine 279 contribute to the active site. Cysteine 249 and cysteine 256 are joined by a disulfide.

The protein belongs to the cutinase family.

It is found in the cell membrane. It catalyses the reaction a butanoate ester + H2O = an aliphatic alcohol + butanoate + H(+). Inhibited by tetrahydrolipstatin (THL), a specific lipase inhibitor. Esterase that may be involved in cell wall biosynthesis and/or maintenance. Hydrolyzes pNP-butyrate (C4). The chain is Carboxylesterase Culp6 homolog from Corynebacterium glutamicum (strain ATCC 13032 / DSM 20300 / JCM 1318 / BCRC 11384 / CCUG 27702 / LMG 3730 / NBRC 12168 / NCIMB 10025 / NRRL B-2784 / 534).